The primary structure comprises 105 residues: MGCCGCGGCGGGCGGCGGGCSGGCGGGCGGGCGSCTTCRCYRVGCCSSCCPCCRGCCGGCCSTPVICCCRRTCHSCGCGCGCGKGCCQQKGCCQQKGCCKKQCCC.

Positions Cys-4–Gly-83 are 13 X 2 AA repeats of CG.

Belongs to the KRTAP type 28 family.

In terms of biological role, in the hair cortex, hair keratin intermediate filaments are embedded in an interfilamentous matrix, consisting of hair keratin-associated proteins (KRTAP), which are essential for the formation of a rigid and resistant hair shaft through their extensive disulfide bond cross-linking with abundant cysteine residues of hair keratins. The matrix proteins include the high-sulfur and high-glycine-tyrosine keratins. The sequence is that of Small cysteine and glycine repeat-containing protein 6 from Homo sapiens (Human).